The primary structure comprises 565 residues: Periplasmic trehalase (565 aa).

The first 30 residues, methionine 1–alanine 30, serve as a signal peptide directing secretion. Substrate is bound by residues arginine 152, tryptophan 159–aspartate 160, asparagine 196, arginine 205–glutamine 207, arginine 277–glutamate 279, and glycine 310. Catalysis depends on proton donor/acceptor residues aspartate 312 and glutamate 496. Position 511 (glutamate 511) interacts with substrate. The disordered stretch occupies residues cysteine 539–proline 565.

Belongs to the glycosyl hydrolase 37 family. Monomer.

The protein resides in the periplasm. The catalysed reaction is alpha,alpha-trehalose + H2O = alpha-D-glucose + beta-D-glucose. Provides the cells with the ability to utilize trehalose at high osmolarity by splitting it into glucose molecules that can subsequently be taken up by the phosphotransferase-mediated uptake system. This chain is Periplasmic trehalase, found in Escherichia coli (strain SMS-3-5 / SECEC).